We begin with the raw amino-acid sequence, 538 residues long: Syncytin-2 (538 aa).

Residues 1-15 (MGLLLLLLILTPLLA) form the signal peptide. At 16–478 (AYCHPDFRLL…GWLNWEGTWK (463 aa)) the chain is on the extracellular side. The short motif at 43 to 46 (CWLC) is the CXXC element. Disulfide bonds link cysteine 43-cysteine 46, cysteine 43-cysteine 439, and cysteine 431-cysteine 438. N-linked (GlcNAc...) asparagine glycans are attached at residues asparagine 146, asparagine 177, asparagine 220, asparagine 241, asparagine 247, asparagine 312, and asparagine 332. Residues 354–374 (LIPLLVGLGIVGSAGTGIAGI) are fusion peptide. The CKS-17 signature appears at 414–430 (LQNRRGLDMLTAAQGGI). Positions 431 to 439 (CLALDEKCC) match the CX6CC motif. N-linked (GlcNAc...) asparagine glycosylation occurs at asparagine 443. A helical transmembrane segment spans residues 479 to 499 (WFSWVLPFTGPLVSLLLLLLF). Residues 500 to 538 (GPCLLNLITQFVSSRLQATKLQMKLNKRVHPRNSQESPF) are Cytoplasmic-facing.

The protein belongs to the gamma type-C retroviral envelope protein family. HERV class-I FRD env subfamily. In terms of assembly, the surface and transmembrane proteins form a heterodimer. They are attached by non-covalent interactions or by a labile interchain disulfide bond. In terms of processing, specific enzymatic cleavages in vivo yield the mature SU and TM proteins. Post-translationally, the CXXC motif is highly conserved across a broad range of retroviral envelope proteins. It is thought to participate in the formation of a labile disulfide bond possibly with the CX6CC motif present in the transmembrane protein.

Its subcellular location is the virion. It is found in the cell membrane. In terms of biological role, this endogenous retroviral envelope protein has retained its original fusogenic properties and participates in trophoblast fusion and the formation of a syncytium during placenta morphogenesis. The interaction with MFSD2A is apparently important for this process. Functionally, endogenous envelope proteins may have kept, lost or modified their original function during evolution but this one can still make pseudotypes with MLV, HIV-1 or SIV-1 virions and confer infectivity. Retroviral envelope proteins mediate receptor recognition and membrane fusion during early infection. The surface protein mediates receptor recognition, while the transmembrane protein anchors the envelope heterodimer to the viral membrane through one transmembrane domain. The other hydrophobic domain, called fusion peptide, mediates fusion of the viral membrane with the target cell membrane. The chain is Syncytin-2 (ERVFRD-1) from Callithrix jacchus (White-tufted-ear marmoset).